The primary structure comprises 369 residues: tRNA 2-selenouridine synthase (369 aa).

The Rhodanese domain occupies 12–136; it reads FLDDIPLMDV…LRNFLFETTR (125 aa). The active-site S-selanylcysteine intermediate is Cys95.

This sequence belongs to the SelU family. As to quaternary structure, monomer.

It carries out the reaction 5-methylaminomethyl-2-thiouridine(34) in tRNA + selenophosphate + (2E)-geranyl diphosphate + H2O + H(+) = 5-methylaminomethyl-2-selenouridine(34) in tRNA + (2E)-thiogeraniol + phosphate + diphosphate. The catalysed reaction is 5-methylaminomethyl-2-thiouridine(34) in tRNA + (2E)-geranyl diphosphate = 5-methylaminomethyl-S-(2E)-geranyl-thiouridine(34) in tRNA + diphosphate. The enzyme catalyses 5-methylaminomethyl-S-(2E)-geranyl-thiouridine(34) in tRNA + selenophosphate + H(+) = 5-methylaminomethyl-2-(Se-phospho)selenouridine(34) in tRNA + (2E)-thiogeraniol. It catalyses the reaction 5-methylaminomethyl-2-(Se-phospho)selenouridine(34) in tRNA + H2O = 5-methylaminomethyl-2-selenouridine(34) in tRNA + phosphate. Functionally, involved in the post-transcriptional modification of the uridine at the wobble position (U34) of tRNA(Lys), tRNA(Glu) and tRNA(Gln). Catalyzes the conversion of 2-thiouridine (S2U-RNA) to 2-selenouridine (Se2U-RNA). Acts in a two-step process involving geranylation of 2-thiouridine (S2U) to S-geranyl-2-thiouridine (geS2U) and subsequent selenation of the latter derivative to 2-selenouridine (Se2U) in the tRNA chain. The protein is tRNA 2-selenouridine synthase of Pseudomonas aeruginosa (strain LESB58).